The sequence spans 139 residues: Putative nickel-responsive regulator (139 aa).

Ni(2+)-binding residues include histidine 79, histidine 90, histidine 92, and cysteine 98.

This sequence belongs to the transcriptional regulatory CopG/NikR family. It depends on Ni(2+) as a cofactor.

Functionally, transcriptional regulator. The polypeptide is Putative nickel-responsive regulator (Nitratidesulfovibrio vulgaris (strain DSM 19637 / Miyazaki F) (Desulfovibrio vulgaris)).